Here is a 153-residue protein sequence, read N- to C-terminus: uncharacterized protein (153 aa).

A disordered region spans residues 1–88; sequence MDKDRPGLPA…VPPPQLDHPG (88 aa).

This is an uncharacterized protein from Epstein-Barr virus (strain P3HR-1) (HHV-4).